Consider the following 296-residue polypeptide: 3-methyl-2-oxobutanoate hydroxymethyltransferase (296 aa).

Residues 1-14 (MTAPTPTPANAATP) show a composition bias toward low complexity. Residues 1–29 (MTAPTPTPANAATPYGTLPPASPLPQRRP) form a disordered region. 2 residues coordinate Mg(2+): D71 and D114. 3-methyl-2-oxobutanoate-binding positions include 71 to 72 (DS), D114, and K143. E145 contributes to the Mg(2+) binding site. E212 serves as the catalytic Proton acceptor.

This sequence belongs to the PanB family. As to quaternary structure, homodecamer; pentamer of dimers. Requires Mg(2+) as cofactor.

It is found in the cytoplasm. The enzyme catalyses 3-methyl-2-oxobutanoate + (6R)-5,10-methylene-5,6,7,8-tetrahydrofolate + H2O = 2-dehydropantoate + (6S)-5,6,7,8-tetrahydrofolate. The protein operates within cofactor biosynthesis; (R)-pantothenate biosynthesis; (R)-pantoate from 3-methyl-2-oxobutanoate: step 1/2. Functionally, catalyzes the reversible reaction in which hydroxymethyl group from 5,10-methylenetetrahydrofolate is transferred onto alpha-ketoisovalerate to form ketopantoate. The protein is 3-methyl-2-oxobutanoate hydroxymethyltransferase of Paracidovorax citrulli (strain AAC00-1) (Acidovorax citrulli).